Consider the following 232-residue polypeptide: Chalcone synthase (232 aa).

Cysteine 7 is a catalytic residue.

The protein belongs to the thiolase-like superfamily. Chalcone/stilbene synthases family.

The catalysed reaction is (E)-4-coumaroyl-CoA + 3 malonyl-CoA + 3 H(+) = 2',4,4',6'-tetrahydroxychalcone + 3 CO2 + 4 CoA. It participates in secondary metabolite biosynthesis; flavonoid biosynthesis. The primary product of this enzyme is 4,2',4',6'-tetrahydroxychalcone (also termed naringenin-chalcone or chalcone) which can under specific conditions spontaneously isomerize into naringenin. The chain is Chalcone synthase (CHS) from Malus domestica (Apple).